Reading from the N-terminus, the 465-residue chain is Cysteine--tRNA ligase (465 aa).

Position 27 (Cys27) interacts with Zn(2+). The 'HIGH' region signature appears at 29–39 (PTVYDDAHLGH). 3 residues coordinate Zn(2+): Cys207, His237, and Glu241. Residues 269–273 (KMSKS) carry the 'KMSKS' region motif. Residue Lys272 coordinates ATP.

It belongs to the class-I aminoacyl-tRNA synthetase family. Monomer. Zn(2+) is required as a cofactor.

The protein resides in the cytoplasm. The enzyme catalyses tRNA(Cys) + L-cysteine + ATP = L-cysteinyl-tRNA(Cys) + AMP + diphosphate. This chain is Cysteine--tRNA ligase (cysS), found in Helicobacter pylori (strain J99 / ATCC 700824) (Campylobacter pylori J99).